Consider the following 184-residue polypeptide: MNLQVDHIRVDFIIGSRRISNFCWAFILLFGALGFFFVGFSSYLQKDLIPFLSAEQILFIPQGIVMCFYGIAGLFISFYLWCTICWNVGSGYNKFDKQKGIFSIFRWGFPGKNRRIFIQFLIKDIQSIRMEVQEGFLSRRVLYIKIKGQPDIPLSRIEEYFTLREMEDKAAELARFLKVSIEGI.

A run of 2 helical transmembrane segments spans residues 21–43 (NFCW…FSSY) and 58–80 (LFIP…SFYL).

The protein belongs to the Ycf4 family.

The protein localises to the plastid. Its subcellular location is the chloroplast thylakoid membrane. Its function is as follows. Seems to be required for the assembly of the photosystem I complex. This Marchantia polymorpha (Common liverwort) protein is Photosystem I assembly protein Ycf4.